Consider the following 401-residue polypeptide: 26S proteasome regulatory subunit 6A (401 aa).

ATP is bound at residue 189–196 (GPPGTGKT).

It belongs to the AAA ATPase family. The 26S proteasome consists of a 20S proteasome core and two 19S regulatory subunits. The 20S proteasome core is composed of 28 subunits that are arranged in four stacked rings, resulting in a barrel-shaped structure. The two end rings are each formed by seven alpha subunits, and the two central rings are each formed by seven beta subunits. The catalytic chamber with the active sites is on the inside of the barrel.

The protein resides in the cytoplasm. Its subcellular location is the nucleus. Functionally, acts as a regulatory subunit of the 26S proteasome which degrades poly-ubiquitinated proteins in the cytoplasm and in the nucleus. It is essential for the regulated turnover of proteins and for the removal of misfolded proteins. The proteasome is a multicatalytic proteinase complex that is characterized by its ability to cleave peptides with Arg, Phe, Tyr, Leu, and Glu adjacent to the leaving group at neutral or slightly basic pH. This Encephalitozoon cuniculi (strain GB-M1) (Microsporidian parasite) protein is 26S proteasome regulatory subunit 6A (RPT5).